Reading from the N-terminus, the 319-residue chain is MSIREWFEDRRKITGLLKNSVERDSKDVNEMERNKNLSIDYVKINRLWVQCDNCESLLYIRFLRENKSVCEECGYYLQMNSSDRIELLIDRGTRHPMDEDMYTLDVLQFHSENEPAHSDPLHSEDESYKDHITFCQIETGLTDAIQTGIGQLNGLPIALGVMDFKFMGGSMGSVVGEKITRLIERATEESLPVIMVCASGGARMQEGSFSSMQMAKIASALYIPQKDNRLLYVSILTSPTTGGVTASFGMLGDIIIAEPKAYIAFAGKIVIDQTLGQKVIEDFQVTEHLFGHGLFDLIVPRNLLKCVLSELFYVLQSSS.

Residues Leu-47–Ser-319 form the CoA carboxyltransferase N-terminal domain. Zn(2+)-binding residues include Cys-51, Cys-54, Cys-70, and Cys-73. The segment at Cys-51–Cys-73 adopts a C4-type zinc-finger fold.

The protein belongs to the AccD/PCCB family. In terms of assembly, acetyl-CoA carboxylase is a heterohexamer composed of biotin carboxyl carrier protein, biotin carboxylase and 2 subunits each of ACCase subunit alpha and ACCase plastid-coded subunit beta (accD). It depends on Zn(2+) as a cofactor.

The protein resides in the plastid. The protein localises to the chloroplast stroma. It carries out the reaction N(6)-carboxybiotinyl-L-lysyl-[protein] + acetyl-CoA = N(6)-biotinyl-L-lysyl-[protein] + malonyl-CoA. It participates in lipid metabolism; malonyl-CoA biosynthesis; malonyl-CoA from acetyl-CoA: step 1/1. Functionally, component of the acetyl coenzyme A carboxylase (ACC) complex. Biotin carboxylase (BC) catalyzes the carboxylation of biotin on its carrier protein (BCCP) and then the CO(2) group is transferred by the transcarboxylase to acetyl-CoA to form malonyl-CoA. This is Acetyl-coenzyme A carboxylase carboxyl transferase subunit beta, chloroplastic from Picea abies (Norway spruce).